The primary structure comprises 195 residues: Keratin-associated protein 4-3 (195 aa).

28 consecutive repeat copies span residues 34–38 (CCRTT), 39–43 (CCRPS), 44–48 (CCISS), 49–53 (CCRPS), 54–58 (CCISS), 59–63 (CCKPS), 64–68 (CCRTT), 69–73 (CCRPS), 74–78 (CCISS), 79–83 (CCRPS), 84–88 (CCISS), 89–93 (CCKPS), 94–98 (CCRTT), 99–103 (CCRPS), 104–108 (CCISS), 109–113 (CCRPS), 114–118 (CCISS), 119–123 (CCKPS), 124–128 (CCQTT), 129–133 (CCRPS), 134–138 (CCISS), 144–148 (CCQPS), 149–153 (CCRPA), 154–158 (CCISS), 159–163 (CCHPS), 164–168 (CCVSS), 179–183 (CCRTT), and 189–193 (CCGSS). Residues 34–193 (CCRTTCCRPS…CFHPICCGSS (160 aa)) are 29 X 5 AA repeats of C-C-[GIKRQVH]-[SPT]-[STA].

Belongs to the KRTAP type 4 family. Interacts with hair keratins. As to expression, expressed specifically in the middle/uper portions of the hair cortex. Not detected in the hair matrix or cuticle.

Functionally, in the hair cortex, hair keratin intermediate filaments are embedded in an interfilamentous matrix, consisting of hair keratin-associated proteins (KRTAP), which are essential for the formation of a rigid and resistant hair shaft through their extensive disulfide bond cross-linking with abundant cysteine residues of hair keratins. The matrix proteins include the high-sulfur and high-glycine-tyrosine keratins. The protein is Keratin-associated protein 4-3 (KRTAP4-3) of Homo sapiens (Human).